The following is a 148-amino-acid chain: Lysozyme-like protein 2 (148 aa).

Positions 1 to 19 are cleaved as a signal peptide; it reads MKAAGILTLIGCLVTGAES. A C-type lysozyme domain is found at 20–148; the sequence is KIYTRCKLAK…SDWKKDCEVS (129 aa). 4 disulfides stabilise this stretch: C25–C145, C49–C133, C83–C98, and C94–C112. E54 is an active-site residue. N-linked (GlcNAc...) asparagine glycosylation is present at N58. The active site involves D71.

This sequence belongs to the glycosyl hydrolase 22 family. Monomer. As to expression, expressed in testis, epididymis and placenta.

It localises to the secreted. The catalysed reaction is Hydrolysis of (1-&gt;4)-beta-linkages between N-acetylmuramic acid and N-acetyl-D-glucosamine residues in a peptidoglycan and between N-acetyl-D-glucosamine residues in chitodextrins.. This Homo sapiens (Human) protein is Lysozyme-like protein 2 (LYZL2).